The primary structure comprises 34 residues: Photosystem II reaction center protein M (34 aa).

A helical transmembrane segment spans residues 5–25 (ILALIAIALFISVPTAFLIII).

This sequence belongs to the PsbM family. PSII is composed of 1 copy each of membrane proteins PsbA, PsbB, PsbC, PsbD, PsbE, PsbF, PsbH, PsbI, PsbJ, PsbK, PsbL, PsbM, PsbT, PsbX, PsbY, PsbZ, Psb30/Ycf12, at least 3 peripheral proteins of the oxygen-evolving complex and a large number of cofactors. It forms dimeric complexes.

The protein resides in the plastid. Its subcellular location is the chloroplast thylakoid membrane. One of the components of the core complex of photosystem II (PSII). PSII is a light-driven water:plastoquinone oxidoreductase that uses light energy to abstract electrons from H(2)O, generating O(2) and a proton gradient subsequently used for ATP formation. It consists of a core antenna complex that captures photons, and an electron transfer chain that converts photonic excitation into a charge separation. This subunit is found at the monomer-monomer interface. The protein is Photosystem II reaction center protein M of Gnetum parvifolium (Small-leaved jointfir).